The following is a 215-amino-acid chain: Outer-membrane lipoprotein LolB (215 aa).

An N-terminal signal peptide occupies residues 1–21 (MLIPKKYYLLIILLSNCLLAS). A lipid anchor (N-palmitoyl cysteine) is attached at cysteine 22. Cysteine 22 is lipidated: S-diacylglycerol cysteine.

The protein belongs to the LolB family. In terms of assembly, monomer.

It localises to the cell outer membrane. Its function is as follows. Plays a critical role in the incorporation of lipoproteins in the outer membrane after they are released by the LolA protein. This Baumannia cicadellinicola subsp. Homalodisca coagulata protein is Outer-membrane lipoprotein LolB.